A 652-amino-acid chain; its full sequence is Protein phosphatase Slingshot homolog 3 (652 aa).

Residues 1 to 16 (MALVTVSRSPPASGHS) show a composition bias toward polar residues. Positions 1 to 31 (MALVTVSRSPPASGHSTPVGPTDRVIRRRGR) are disordered. Residue Ala-2 is modified to N-acetylalanine. Residues Ser-9, Ser-37, Ser-85, and Ser-87 each carry the phosphoserine modification. The disordered stretch occupies residues 43-91 (GAVLGLQDGGEGNDAAEADPEPMEKPSGEEQPAEDQTDNGQGSQSPWKQ). Over residues 80–90 (DNGQGSQSPWK) the composition is skewed to polar residues. Residues 266–321 (EQMEQAILAELWQVLDASDLDSVTSKEIRQALELRLGCPLQQYRDFIDNQMLLLMA) form the DEK-C domain. The Tyrosine-protein phosphatase domain occupies 325-466 (RASRIFPHLY…LQTYQGILTA (142 aa)). Cys-410 acts as the Phosphocysteine intermediate in catalysis. Disordered stretches follow at residues 484–526 (EPLA…LGLR), 540–580 (LLEP…KGGQ), and 610–652 (RAFQ…EGKA). A compositionally biased stretch (low complexity) spans 540-552 (LLEPSSEPESTTE). Basic and acidic residues predominate over residues 642–652 (SVDDSREEGKA).

This sequence belongs to the protein-tyrosine phosphatase family. Does not bind to, or colocalize with, filamentous actin.

It localises to the cytoplasm. The protein localises to the cytoskeleton. It is found in the nucleus. It catalyses the reaction O-phospho-L-tyrosyl-[protein] + H2O = L-tyrosyl-[protein] + phosphate. The enzyme catalyses O-phospho-L-seryl-[protein] + H2O = L-seryl-[protein] + phosphate. The catalysed reaction is O-phospho-L-threonyl-[protein] + H2O = L-threonyl-[protein] + phosphate. In terms of biological role, protein phosphatase which may play a role in the regulation of actin filament dynamics. Can dephosphorylate and activate the actin binding/depolymerizing factor cofilin, which subsequently binds to actin filaments and stimulates their disassembly. This Rattus norvegicus (Rat) protein is Protein phosphatase Slingshot homolog 3 (Ssh3).